A 173-amino-acid polypeptide reads, in one-letter code: MNREEKSEIIQSVAEKLSKAQGVYLTEFSGLTVSEISDLRKQFREKDIEYKVVKNTLIKKALAHTKISDKLADGLKNTTAVAFGYDDPIAPAKIIKKYSDGNEKLKFKMASVDGTIFEAGQLDQLSNMLSKTENIGRIAGTINNVISGVPGTVNAVMRNLVSALEQIAKQKAA.

It belongs to the universal ribosomal protein uL10 family. In terms of assembly, part of the ribosomal stalk of the 50S ribosomal subunit. The N-terminus interacts with L11 and the large rRNA to form the base of the stalk. The C-terminus forms an elongated spine to which L12 dimers bind in a sequential fashion forming a multimeric L10(L12)X complex.

Its function is as follows. Forms part of the ribosomal stalk, playing a central role in the interaction of the ribosome with GTP-bound translation factors. The sequence is that of Large ribosomal subunit protein uL10 from Chloroherpeton thalassium (strain ATCC 35110 / GB-78).